Here is a 101-residue protein sequence, read N- to C-terminus: Small ribosomal subunit protein uS14 (101 aa).

The protein belongs to the universal ribosomal protein uS14 family. Part of the 30S ribosomal subunit. Contacts proteins S3 and S10.

In terms of biological role, binds 16S rRNA, required for the assembly of 30S particles and may also be responsible for determining the conformation of the 16S rRNA at the A site. This is Small ribosomal subunit protein uS14 from Chromobacterium violaceum (strain ATCC 12472 / DSM 30191 / JCM 1249 / CCUG 213 / NBRC 12614 / NCIMB 9131 / NCTC 9757 / MK).